The chain runs to 229 residues: C-&gt;U-editing enzyme APOBEC-1 (229 aa).

One can recognise a CMP/dCMP-type deaminase domain in the interval 10–134 (VDPTLRRRIE…QRNRQGLRDL (125 aa)). Residue His-61 coordinates Zn(2+). The active-site Proton donor is Glu-63. Residues Cys-93 and Cys-96 each coordinate Zn(2+).

Belongs to the cytidine and deoxycytidylate deaminase family. As to quaternary structure, homodimer. Interacts with A1CF; form an mRNA editing complex. Interacts with RBM47; form an mRNA editing complex. Found in a complex with CELF2/CUGBP2 and A1CF. Interacts with HNRPAB. Interacts with SYNCRIP. The cofactor is Zn(2+).

The protein localises to the cytoplasm. The protein resides in the nucleus. The enzyme catalyses a cytidine in mRNA + H2O + H(+) = a uridine in mRNA + NH4(+). It carries out the reaction cytidine(6666) in apoB mRNA + H2O + H(+) = uridine(6666) in apoB mRNA + NH4(+). Its function is as follows. Cytidine deaminase catalyzing the cytidine to uridine postranscriptional editing of a variety of mRNAs. Form complexes with cofactors that confer differential editing activity and selectivity. Responsible for the postranscriptional editing of a CAA codon for Gln to a UAA codon for stop in the apolipoprotein B mRNA. Also involved in CGA (Arg) to UGA (Stop) editing in the NF1 mRNA. May also play a role in the epigenetic regulation of gene expression by participating in DNA demethylation. The polypeptide is C-&gt;U-editing enzyme APOBEC-1 (Mesocricetus auratus (Golden hamster)).